Consider the following 566-residue polypeptide: Sodium-dependent high-affinity dicarboxylate transporter 3 (566 aa).

A run of 12 helical transmembrane segments spans residues 55-75 (LVLV…GPEW), 92-112 (VMPL…VGVL), 123-139 (NDTN…AAAV), 162-182 (WIML…SNTA), 219-239 (MATG…TGTA), 268-288 (WIFF…MTLV), 329-349 (ILLS…GVFF), 352-372 (GAYT…VLPS), 400-420 (ETFP…AAGV), 439-459 (LPLW…TNIC), 496-516 (FAFI…SGMV), and 521-541 (MAFV…LYMN).

It belongs to the SLC13A/DASS transporter (TC 2.A.47) family. NADC subfamily. In terms of tissue distribution, nad-1 and nad-2 are coexpressed in the intestinal tract from early larvae to adults, expression is from the pharynx through to the anus. Expression level is significantly greater in the anterior half of the intestine than in the posterior half.

The protein localises to the membrane. In terms of biological role, high-affinity sodium-dicarboxylate cotransporter that accepts a range of tricarboxylic acid-cycle intermediates with 4-5 carbon atoms. There is no interaction with monocarboxylates. Plays a role in the regulation of life span. This is Sodium-dependent high-affinity dicarboxylate transporter 3 (nac-3) from Caenorhabditis elegans.